The following is a 269-amino-acid chain: Phosphatidate cytidylyltransferase (269 aa).

The next 8 helical transmembrane spans lie at 13-33 (LAAIVFLFLVIVGKLPFTILI), 50-70 (LKLVSLPGLIGLLLLWMFLLP), 81-101 (ISKMEIALFAVLLLLTYTVLV), 110-130 (VGFITLAAIYIGMCFHYFIEI), 138-158 (LTYIFYACVVIWSTDSGAYFV), 180-200 (FAGGIVIALVLATIFQLVAQL), 201-221 (PIPYIYLLLITLFLSVFGQLG), and 247-267 (ILDRFDSFLFVMPFLYFLLAL).

This sequence belongs to the CDS family.

It localises to the cell membrane. The enzyme catalyses a 1,2-diacyl-sn-glycero-3-phosphate + CTP + H(+) = a CDP-1,2-diacyl-sn-glycerol + diphosphate. The protein operates within phospholipid metabolism; CDP-diacylglycerol biosynthesis; CDP-diacylglycerol from sn-glycerol 3-phosphate: step 3/3. The chain is Phosphatidate cytidylyltransferase (cdsA) from Bacillus subtilis (strain 168).